A 156-amino-acid polypeptide reads, in one-letter code: Small ribosomal subunit protein uS7 (156 aa).

This sequence belongs to the universal ribosomal protein uS7 family. In terms of assembly, part of the 30S ribosomal subunit. Contacts proteins S9 and S11.

Functionally, one of the primary rRNA binding proteins, it binds directly to 16S rRNA where it nucleates assembly of the head domain of the 30S subunit. Is located at the subunit interface close to the decoding center, probably blocks exit of the E-site tRNA. The polypeptide is Small ribosomal subunit protein uS7 (Mycobacterium tuberculosis (strain CDC 1551 / Oshkosh)).